Here is a 1486-residue protein sequence, read N- to C-terminus: Chromosome partition protein MukB (1486 aa).

An ATP-binding site is contributed by 34-41 (GGNGAGKS). Coiled coils occupy residues 326–418 (LEAD…QYNQ), 444–480 (LETF…QAYQ), and 509–603 (RHLA…RAPV). The tract at residues 666–783 (PGGSEDQRLN…EVPLFGRAAR (118 aa)) is flexible hinge. 3 coiled-coil regions span residues 835-923 (EAEI…AKLE), 977-1115 (EMLS…TAKA), and 1209-1266 (VEAI…QNVS).

This sequence belongs to the SMC family. MukB subfamily. In terms of assembly, homodimerization via its hinge domain. Binds to DNA via its C-terminal region. Interacts, and probably forms a ternary complex, with MukE and MukF via its C-terminal region. The complex formation is stimulated by calcium or magnesium. Interacts with tubulin-related protein FtsZ.

The protein resides in the cytoplasm. It localises to the nucleoid. Plays a central role in chromosome condensation, segregation and cell cycle progression. Functions as a homodimer, which is essential for chromosome partition. Involved in negative DNA supercoiling in vivo, and by this means organize and compact chromosomes. May achieve or facilitate chromosome segregation by condensation DNA from both sides of a centrally located replisome during cell division. The chain is Chromosome partition protein MukB from Escherichia coli O157:H7.